The chain runs to 494 residues: Alpha-amylase B (494 aa).

A signal peptide spans 1-18; sequence MFLAKSIVCLALLAVANA. Residue Q19 is modified to Pyrrolidone carboxylic acid. C46 and C102 are oxidised to a cystine. Residues N116, R165, and D174 each contribute to the Ca(2+) site. The cysteines at positions 153 and 167 are disulfide-linked. Chloride is bound at residue R202. D204 acts as the Nucleophile in catalysis. A Ca(2+)-binding site is contributed by H208. E241 functions as the Proton donor in the catalytic mechanism. Chloride-binding residues include N304 and R343. Disulfide bonds link C376-C382 and C448-C460.

Belongs to the glycosyl hydrolase 13 family. In terms of assembly, monomer. Requires Ca(2+) as cofactor. Chloride serves as cofactor.

It catalyses the reaction Endohydrolysis of (1-&gt;4)-alpha-D-glucosidic linkages in polysaccharides containing three or more (1-&gt;4)-alpha-linked D-glucose units.. In Drosophila yakuba (Fruit fly), this protein is Alpha-amylase B (Amy-d).